Here is a 342-residue protein sequence, read N- to C-terminus: UDP-N-acetylglucosamine--N-acetylmuramyl-(pentapeptide) pyrophosphoryl-undecaprenol N-acetylglucosamine transferase (342 aa).

UDP-N-acetyl-alpha-D-glucosamine-binding positions include 10-12 (TGG), asparagine 124, serine 177, and glutamine 275.

It belongs to the glycosyltransferase 28 family. MurG subfamily.

It is found in the cell inner membrane. It catalyses the reaction di-trans,octa-cis-undecaprenyl diphospho-N-acetyl-alpha-D-muramoyl-L-alanyl-D-glutamyl-meso-2,6-diaminopimeloyl-D-alanyl-D-alanine + UDP-N-acetyl-alpha-D-glucosamine = di-trans,octa-cis-undecaprenyl diphospho-[N-acetyl-alpha-D-glucosaminyl-(1-&gt;4)]-N-acetyl-alpha-D-muramoyl-L-alanyl-D-glutamyl-meso-2,6-diaminopimeloyl-D-alanyl-D-alanine + UDP + H(+). Its pathway is cell wall biogenesis; peptidoglycan biosynthesis. Functionally, cell wall formation. Catalyzes the transfer of a GlcNAc subunit on undecaprenyl-pyrophosphoryl-MurNAc-pentapeptide (lipid intermediate I) to form undecaprenyl-pyrophosphoryl-MurNAc-(pentapeptide)GlcNAc (lipid intermediate II). This is UDP-N-acetylglucosamine--N-acetylmuramyl-(pentapeptide) pyrophosphoryl-undecaprenol N-acetylglucosamine transferase from Campylobacter jejuni subsp. doylei (strain ATCC BAA-1458 / RM4099 / 269.97).